A 586-amino-acid polypeptide reads, in one-letter code: YTH domain-containing family protein 2 (586 aa).

Disordered regions lie at residues 98-128 (LKEK…QPVQ), 141-181 (SQDQ…KESP), and 301-464 (QGLA…PLVS). 3 stretches are compositionally biased toward polar residues: residues 107–128 (ALRQ…QPVQ), 169–181 (TLPT…KESP), and 352–368 (SSQA…TDIQ). Residues 398 to 418 (CARRHRSSSPRGRSGSHKSRR) are compositionally biased toward basic residues. Over residues 421–436 (TDSPVSRSTTKSTPSR) the composition is skewed to polar residues. One can recognise a YTH domain in the interval 435–576 (SRARQPGHRD…YCGRDLLRLM (142 aa)). Positions 441–458 (GHRDYREYRDDRNRDTKP) are enriched in basic and acidic residues.

The protein belongs to the YTHDF family. YTHDF1 subfamily.

Specifically recognizes and binds N6-methyladenosine (m6A)-containing mRNAs, and regulates their stability. M6A is a modification present at internal sites of mRNAs and some non-coding RNAs and plays a role in mRNA stability and processing. Plays a role in pathogenicity towards plant host. The polypeptide is YTH domain-containing family protein 2 (Pyricularia oryzae (strain 70-15 / ATCC MYA-4617 / FGSC 8958) (Rice blast fungus)).